The primary structure comprises 1877 residues: Transmembrane protein 131 (1877 aa).

Positions 1–20 (MGKRAGGAAAAAAAASTSSA) are cleaved as a signal peptide. Over 21–1115 (AGLEPAAGRG…AEALPRPNWE (1095 aa)) the chain is Lumenal. The papD-L domain stretch occupies residues 107–281 (RFEPPMLDFH…ETKGVMRASF (175 aa)). A helical transmembrane segment spans residues 1116–1136 (LALYIIISGVMSALFLLVIGT). Residues 1137 to 1877 (AYLEAQGIWE…WSNSHFPHEN (741 aa)) lie on the Cytoplasmic side of the membrane. Residues 1197 to 1227 (NASSRPGTGSHRQCGTSVHPHSSHGSKNSAD) show a composition bias toward polar residues. Disordered stretches follow at residues 1197-1573 (NASS…SSST), 1590-1655 (LKQR…NPTF), 1679-1707 (SDFS…SPVS), and 1830-1852 (NSAA…TYNP). Over residues 1233–1258 (TRNSSSMSSRTSPQAAASQSTSKTSP) the composition is skewed to low complexity. Over residues 1301–1311 (QPPPPVPQHQE) the composition is skewed to pro residues. Serine 1318 and serine 1338 each carry phosphoserine. Basic and acidic residues-rich tracts occupy residues 1326-1339 (SHPE…HSSE) and 1349-1360 (AMDKDFDHHDSS). Phosphoserine is present on serine 1371. The segment covering 1376 to 1391 (SKGKGKSLQQRKAKPP) has biased composition (basic residues). A compositionally biased stretch (basic and acidic residues) spans 1392 to 1414 (KKQEEKEKRGKGKPQEDELKDAL). The span at 1420–1432 (SSTTTETSNPDTE) shows a compositional bias: low complexity. Polar residues-rich tracts occupy residues 1507-1523 (TLAS…TKGT) and 1538-1550 (LPSS…TSSS). Residues 1599-1608 (PASPSLPTAP) show a composition bias toward pro residues. Low complexity predominate over residues 1609 to 1646 (CPFTSRGSYSSVVNSSGSDTKAKQTSSSKSKLTKAASL). Positions 1830-1839 (NSAAAHTPSA) are enriched in polar residues. Serine 1857 and serine 1865 each carry phosphoserine.

Belongs to the TMEM131 family. Interacts (via PapD-L domain) with COL1A2 (via C-terminus); the interaction is direct, may occur with other collagen proteins, and is involved in assembly and TRAPPIII ER-to-Golgi transport complex-dependent secretion of collagen. Interacts (via C-terminus) with TRAPPC8 (via C-terminus); the interaction is direct.

Its subcellular location is the membrane. Collagen binding transmembrane protein involved in collagen secretion by recruiting the ER-to-Golgi transport complex TRAPPIII. May play a role in the immune response to viral infection. The chain is Transmembrane protein 131 from Mus musculus (Mouse).